A 739-amino-acid polypeptide reads, in one-letter code: Oxysterol-binding protein-related protein 9 (739 aa).

The PH domain maps to 2 to 99 (ASIMEGPLSK…WIHALEETIL (98 aa)). 2 disordered regions span residues 220–292 (TQAS…SYSS) and 306–371 (SSTS…ESVE). The segment covering 249-259 (NLGSRQSPTPI) has biased composition (polar residues). Over residues 260–276 (STGSGQSAPSSSLTSPS) the composition is skewed to low complexity. 3 stretches are compositionally biased toward polar residues: residues 277 to 292 (HVNL…SYSS), 306 to 330 (SSTS…STGA), and 338 to 352 (TESL…TNEA).

This sequence belongs to the OSBP family.

The catalysed reaction is a 1,2-diacyl-sn-glycero-3-phospho-(1D-myo-inositol 4-phosphate)(out) + a 1,2-diacyl-sn-glycero-3-phospho-L-serine(in) = a 1,2-diacyl-sn-glycero-3-phospho-(1D-myo-inositol 4-phosphate)(in) + a 1,2-diacyl-sn-glycero-3-phospho-L-serine(out). Functionally, interacts with OSBPL11 to function as lipid transfer proteins. Together they form a heterodimer that localizes at the ER-trans-Golgi membrane contact sites, and exchanges phosphatidylserine (1,2-diacyl-sn-glycero-3-phospho-L-serine, PS) for phosphatidylinositol-4-phosphate (1,2-diacyl-sn-glycero-3-phospho-(1D-myo-inositol 4-phosphate), PI(4)P) between the two organelles, a step that is critical for sphingomyelin synthesis in the Golgi complex. The sequence is that of Oxysterol-binding protein-related protein 9 (osbpl9) from Xenopus tropicalis (Western clawed frog).